A 143-amino-acid polypeptide reads, in one-letter code: Photosystem I reaction center subunit IV B, chloroplastic (143 aa).

The N-terminal 51 residues, 1 to 51 (MASSSMASAASGFMVATPNIATSNTAPRTSMLFFSSSKNNTTTNFPRLVVR), are a transit peptide targeting the chloroplast. Residues 56 to 75 (AAPPAATATAEGEAPPAKAA) are compositionally biased toward low complexity. Residues 56 to 86 (AAPPAATATAEGEAPPAKAAKPPPIGPKRGT) are disordered.

This sequence belongs to the PsaE family. In terms of processing, 2 isoforms exists (ratio 1:1). With or without the N-terminal alanine.

It localises to the plastid. It is found in the chloroplast thylakoid membrane. In terms of biological role, stabilizes the interaction between PsaC and the PSI core, assists the docking of the ferredoxin to PSI and interacts with ferredoxin-NADP oxidoreductase. The polypeptide is Photosystem I reaction center subunit IV B, chloroplastic (PSAEB) (Nicotiana sylvestris (Wood tobacco)).